A 185-amino-acid chain; its full sequence is Elongation factor P (185 aa).

The protein belongs to the elongation factor P family.

It is found in the cytoplasm. It functions in the pathway protein biosynthesis; polypeptide chain elongation. Involved in peptide bond synthesis. Stimulates efficient translation and peptide-bond synthesis on native or reconstituted 70S ribosomes in vitro. Probably functions indirectly by altering the affinity of the ribosome for aminoacyl-tRNA, thus increasing their reactivity as acceptors for peptidyl transferase. In Endomicrobium trichonymphae, this protein is Elongation factor P.